A 348-amino-acid chain; its full sequence is Doublesex- and mab-3-related transcription factor dmd-10 (348 aa).

2 consecutive DNA-binding regions (DM) follow at residues 43 to 91 (CQRC…YNQF) and 119 to 166 (CQKC…KIRR). The disordered stretch occupies residues 316–348 (SMSMSSSPSKDDESGDEDSDGLNSNSIIDVITV).

Belongs to the DMRT family. As to expression, dimorphically expressed in the dimorphically connected interneuron AVG; expression is observed in the AVG in males, but not in hermaphrodites.

It localises to the nucleus. Its function is as follows. Transcription factor. Plays a role in neuronal signaling in polymodal sensory neuron ASH, downstream of sensory receptor activation. Required for maintenance of AVG synapses. This Caenorhabditis elegans protein is Doublesex- and mab-3-related transcription factor dmd-10.